The primary structure comprises 146 residues: Large ribosomal subunit protein uL15 (146 aa).

Positions 1-13 (MKLHELKAAEGSR) are enriched in basic and acidic residues. Residues 1–56 (MKLHELKAAEGSRRVRNRVGRGAATGNGKTSGRGQKGQKARSGGKLRPGFEGGQLP) form a disordered region. Positions 23 to 35 (AATGNGKTSGRGQ) are enriched in gly residues.

This sequence belongs to the universal ribosomal protein uL15 family. Part of the 50S ribosomal subunit.

Binds to the 23S rRNA. This is Large ribosomal subunit protein uL15 from Staphylococcus epidermidis (strain ATCC 35984 / DSM 28319 / BCRC 17069 / CCUG 31568 / BM 3577 / RP62A).